Consider the following 630-residue polypeptide: PAN2-PAN3 deadenylation complex subunit PAN3 (630 aa).

The C3H1-type zinc finger occupies 7–36 (SAKDTLCKNILIYGYCKFENKGCAFSHHKP). Disordered stretches follow at residues 38 to 72 (VGQP…PSFQ) and 135 to 171 (GFGS…QSSG). Positions 44 to 56 (SASSSSGYSGNSS) are enriched in low complexity. The span at 140–149 (YPSSPNTSGA) shows a compositional bias: polar residues. The interval 231–501 (QTLPRSNLPE…LDRFSQRYLT (271 aa)) is pseudokinase domain. ATP is bound by residues Arg283, 333–340 (DYFPNSST), and 388–389 (TK). A coiled-coil region spans residues 502-540 (TRLFSTINNLEDSTDFMESQITTELENARLFRLLTKLNF). Positions 541–630 (IIDRPEAKDW…DSVFRNLTRD (90 aa)) are knob domain.

The protein belongs to the protein kinase superfamily. PAN3 family. As to quaternary structure, homodimer. Forms a heterotrimer with a catalytic subunit PAN2 to form the poly(A)-nuclease (PAN) deadenylation complex. Interacts (via PAM-2 motif) with poly(A)-binding protein PAB1 (via PABC domain), conferring substrate specificity of the enzyme complex.

It localises to the cytoplasm. Regulatory subunit of the poly(A)-nuclease (PAN) deadenylation complex, one of two cytoplasmic mRNA deadenylases involved in mRNA turnover. PAN specifically shortens poly(A) tails of RNA and the activity is stimulated by poly(A)-binding protein PAB1. PAN deadenylation is followed by rapid degradation of the shortened mRNA tails by the CCR4-NOT complex. Deadenylated mRNAs are then degraded by two alternative mechanisms, namely exosome-mediated 3'-5' exonucleolytic degradation, or deadenylation-dependent mRNA decaping and subsequent 5'-3' exonucleolytic degradation by XRN1. May also be involved in post-transcriptional maturation of mRNA poly(A) tails. PAN3 acts as a positive regulator for PAN activity, recruiting the catalytic subunit PAN2 to mRNA via its interaction with RNA and with PAB1. The polypeptide is PAN2-PAN3 deadenylation complex subunit PAN3 (Scheffersomyces stipitis (strain ATCC 58785 / CBS 6054 / NBRC 10063 / NRRL Y-11545) (Yeast)).